The following is a 211-amino-acid chain: Histone H1t (211 aa).

The residue at position 1 (A1) is an N-acetylalanine. A compositionally biased stretch (low complexity) spans 1-16; sequence AETAPAAPADSVPASV. The tract at residues 1–42 is disordered; the sequence is AETAPAAPADSVPASVEKPPAKKRGKKPVGLTGTSRKAPSAS. Over residues 32 to 42 the composition is skewed to polar residues; it reads TGTSRKAPSAS. The 74-residue stretch at 39-112 folds into the H15 domain; it reads PSASVSKLIT…GASGSFKLSK (74 aa). A Citrulline modification is found at R57. A disordered region spans residues 101 to 211; sequence GTGASGSFKL…TNPRKATNRK (111 aa). The segment covering 121–135 has biased composition (basic residues); sequence GKVKKPAAAKTKKLV. A Phosphoserine modification is found at S142. The segment covering 147–156 has biased composition (basic residues); that stretch reads KANKRAKKSR. T158 is subject to Phosphothreonine. S166 and S181 each carry phosphoserine. The segment covering 176 to 189 has biased composition (basic residues); sequence KQQRKSPAKARAAK.

Belongs to the histone H1/H5 family. Post-translationally, phosphorylated in early spermatids. Citrullination at Arg-57 (H1R54ci) by PADI4 takes place within the DNA-binding site of H1 and results in its displacement from chromatin and global chromatin decondensation, thereby promoting pluripotency and stem cell maintenance. As to expression, testis-specific.

Its subcellular location is the nucleus. The protein resides in the chromosome. In terms of biological role, testis-specific histone H1 that forms less compacted chromatin compared to other H1 histone subtypes. Formation of more relaxed chromatin may be required to promote chromatin architecture required for proper chromosome regulation during meiosis, such as homologous recombination. Histones H1 act as linkers that bind to nucleosomes and compact polynucleosomes into a higher-order chromatin configuration. This chain is Histone H1t, found in Sus scrofa (Pig).